The primary structure comprises 243 residues: Pyridoxine 5'-phosphate synthase (243 aa).

Residue Asn9 coordinates 3-amino-2-oxopropyl phosphate. Position 11 to 12 (11 to 12 (DH)) interacts with 1-deoxy-D-xylulose 5-phosphate. Position 20 (Arg20) interacts with 3-amino-2-oxopropyl phosphate. The active-site Proton acceptor is His45. Arg47 and His52 together coordinate 1-deoxy-D-xylulose 5-phosphate. Glu72 functions as the Proton acceptor in the catalytic mechanism. 1-deoxy-D-xylulose 5-phosphate is bound at residue Thr102. The active-site Proton donor is the His193. 3-amino-2-oxopropyl phosphate is bound by residues Gly194 and 215 to 216 (GH).

Belongs to the PNP synthase family. In terms of assembly, homooctamer; tetramer of dimers.

Its subcellular location is the cytoplasm. It catalyses the reaction 3-amino-2-oxopropyl phosphate + 1-deoxy-D-xylulose 5-phosphate = pyridoxine 5'-phosphate + phosphate + 2 H2O + H(+). It participates in cofactor biosynthesis; pyridoxine 5'-phosphate biosynthesis; pyridoxine 5'-phosphate from D-erythrose 4-phosphate: step 5/5. Catalyzes the complicated ring closure reaction between the two acyclic compounds 1-deoxy-D-xylulose-5-phosphate (DXP) and 3-amino-2-oxopropyl phosphate (1-amino-acetone-3-phosphate or AAP) to form pyridoxine 5'-phosphate (PNP) and inorganic phosphate. This chain is Pyridoxine 5'-phosphate synthase, found in Vibrio cholerae serotype O1 (strain ATCC 39315 / El Tor Inaba N16961).